We begin with the raw amino-acid sequence, 184 residues long: Non-fimbrial adhesin 1 (184 aa).

The N-terminal stretch at 1–28 (MKAKKYENQIYNENGRRCQRHGRRLAIA) is a signal peptide. Cys-57 and Cys-91 form a disulfide bridge.

Forms a polymeric structure, which disintegrates with elevated temperature into a monomer but with some relatively stable dimers.

The protein is Non-fimbrial adhesin 1 (nfaA) of Escherichia coli.